The chain runs to 137 residues: MDTKTQSLPNAHTQPHSNSGPQSHACNQCSCSHHCQNCSQSCDRSQSCSRSRSSSQSPTGHRSLPGHQSQSLSPSPSPRHRKRAMHSHRCPSRPGTRSCSHSKKRKNVEGKANKRKGIKRSQQVYKTKRRSSGRKYN.

Positions 1 to 21 (MDTKTQSLPNAHTQPHSNSGP) are enriched in polar residues. Positions 1-137 (MDTKTQSLPN…KRRSSGRKYN (137 aa)) are disordered. Residues H12, H16, H24, C29, C31, C35, and C38 each contribute to the Zn(2+) site. The segment covering 22–74 (QSHACNQCSCSHHCQNCSQSCDRSQSCSRSRSSSQSPTGHRSLPGHQSQSLSP) has biased composition (low complexity). Positions 78-91 (PRHRKRAMHSHRCP) are enriched in basic residues. The Nuclear localization signal motif lies at 110 to 118 (GKANKRKGI). Basic residues predominate over residues 126-137 (KTKRRSSGRKYN). The residue at position 132 (S132) is a Phosphoserine.

Belongs to the nuclear transition protein 2 family. As to expression, testis. Expression is restricted to haploid germ cells.

Its subcellular location is the nucleus. It is found in the nucleolus. The protein localises to the chromosome. Its function is as follows. Plays a key role in the replacement of histones to protamine in the elongating spermatids of mammals. In condensing spermatids, loaded onto the nucleosomes, where it promotes the recruitment and processing of protamines, which are responsible for histone eviction. The sequence is that of Nuclear transition protein 2 (TNP2) from Sus scrofa (Pig).